The sequence spans 833 residues: Leucine--tRNA ligase (833 aa).

A 'HIGH' region motif is present at residues 41–52 (PYPSGAGLHVGH). The 'KMSKS' region motif lies at 610-614 (KMSKS). Lys-613 is a binding site for ATP.

It belongs to the class-I aminoacyl-tRNA synthetase family.

It is found in the cytoplasm. The catalysed reaction is tRNA(Leu) + L-leucine + ATP = L-leucyl-tRNA(Leu) + AMP + diphosphate. This chain is Leucine--tRNA ligase, found in Streptococcus uberis (strain ATCC BAA-854 / 0140J).